We begin with the raw amino-acid sequence, 564 residues long: Proline--tRNA ligase (564 aa).

It belongs to the class-II aminoacyl-tRNA synthetase family. ProS type 1 subfamily. Homodimer.

It localises to the cytoplasm. The catalysed reaction is tRNA(Pro) + L-proline + ATP = L-prolyl-tRNA(Pro) + AMP + diphosphate. Catalyzes the attachment of proline to tRNA(Pro) in a two-step reaction: proline is first activated by ATP to form Pro-AMP and then transferred to the acceptor end of tRNA(Pro). As ProRS can inadvertently accommodate and process non-cognate amino acids such as alanine and cysteine, to avoid such errors it has two additional distinct editing activities against alanine. One activity is designated as 'pretransfer' editing and involves the tRNA(Pro)-independent hydrolysis of activated Ala-AMP. The other activity is designated 'posttransfer' editing and involves deacylation of mischarged Ala-tRNA(Pro). The misacylated Cys-tRNA(Pro) is not edited by ProRS. The protein is Proline--tRNA ligase of Xanthomonas oryzae pv. oryzae (strain KACC10331 / KXO85).